Here is a 684-residue protein sequence, read N- to C-terminus: DNA ligase (684 aa).

NAD(+) is bound by residues 34-38, 83-84, and E117; these read DYDFD and SL. K119 acts as the N6-AMP-lysine intermediate in catalysis. NAD(+)-binding residues include R140, E188, K301, and K325. Residues C419, C422, C437, and C443 each contribute to the Zn(2+) site. The 83-residue stretch at 602-684 folds into the BRCT domain; that stretch reads DAPQTFAGMT…QTMLAAESGD (83 aa).

It belongs to the NAD-dependent DNA ligase family. LigA subfamily. Mg(2+) is required as a cofactor. It depends on Mn(2+) as a cofactor.

It carries out the reaction NAD(+) + (deoxyribonucleotide)n-3'-hydroxyl + 5'-phospho-(deoxyribonucleotide)m = (deoxyribonucleotide)n+m + AMP + beta-nicotinamide D-nucleotide.. Functionally, DNA ligase that catalyzes the formation of phosphodiester linkages between 5'-phosphoryl and 3'-hydroxyl groups in double-stranded DNA using NAD as a coenzyme and as the energy source for the reaction. It is essential for DNA replication and repair of damaged DNA. This chain is DNA ligase, found in Chloroherpeton thalassium (strain ATCC 35110 / GB-78).